A 255-amino-acid polypeptide reads, in one-letter code: Probable ubiquitin carboxyl-terminal hydrolase (255 aa).

In terms of domain architecture, UCH catalytic spans 13–237; it reads NWIPLEANPE…IRFNLMGLVK (225 aa). Positions 16-21 are interaction with ubiquitin; it reads PLEANP. Catalysis depends on Cys-103, which acts as the Nucleophile. His-177 functions as the Proton donor in the catalytic mechanism. The tract at residues 227 to 232 is interaction with ubiquitin; it reads EIRFNL. Residues 235 to 255 are disordered; sequence LVKKPNEESEEEEEKEKEETK. Residues 242–255 are compositionally biased toward acidic residues; that stretch reads ESEEEEEKEKEETK.

It belongs to the peptidase C12 family.

It localises to the cytoplasm. It catalyses the reaction Thiol-dependent hydrolysis of ester, thioester, amide, peptide and isopeptide bonds formed by the C-terminal Gly of ubiquitin (a 76-residue protein attached to proteins as an intracellular targeting signal).. In terms of biological role, ubiquitin-protein hydrolase is involved both in the processing of ubiquitin precursors and of ubiquitinated proteins. This enzyme is a thiol protease that recognizes and hydrolyzes a peptide bond at the C-terminal glycine of either ubiquitin or nedd8. This is Probable ubiquitin carboxyl-terminal hydrolase (uch1) from Dictyostelium discoideum (Social amoeba).